A 129-amino-acid chain; its full sequence is Protein Turandot B1 (129 aa).

Residues 1–21 form the signal peptide; it reads MNSATSLMCFALLLISPLCMG.

The protein belongs to the Turandot family.

The protein localises to the secreted. Functionally, a humoral factor that may play a role in stress tolerance. The sequence is that of Protein Turandot B1 (TotB1) from Drosophila erecta (Fruit fly).